The primary structure comprises 280 residues: Acetyl-coenzyme A carboxylase carboxyl transferase subunit beta (280 aa).

The CoA carboxyltransferase N-terminal domain occupies 24–280; that stretch reads AWIKCDKCKN…IYTLIRHTHG (257 aa). Cys28, Cys31, Cys47, and Cys50 together coordinate Zn(2+). The segment at 28-50 adopts a C4-type zinc-finger fold; that stretch reads CDKCKNILYIEDLLKNLKICPHC.

It belongs to the AccD/PCCB family. Acetyl-CoA carboxylase is a heterohexamer composed of biotin carboxyl carrier protein (AccB), biotin carboxylase (AccC) and two subunits each of ACCase subunit alpha (AccA) and ACCase subunit beta (AccD). Zn(2+) serves as cofactor.

The protein resides in the cytoplasm. The catalysed reaction is N(6)-carboxybiotinyl-L-lysyl-[protein] + acetyl-CoA = N(6)-biotinyl-L-lysyl-[protein] + malonyl-CoA. It functions in the pathway lipid metabolism; malonyl-CoA biosynthesis; malonyl-CoA from acetyl-CoA: step 1/1. Functionally, component of the acetyl coenzyme A carboxylase (ACC) complex. Biotin carboxylase (BC) catalyzes the carboxylation of biotin on its carrier protein (BCCP) and then the CO(2) group is transferred by the transcarboxylase to acetyl-CoA to form malonyl-CoA. The chain is Acetyl-coenzyme A carboxylase carboxyl transferase subunit beta from Sulfurihydrogenibium sp. (strain YO3AOP1).